The following is a 201-amino-acid chain: Small ribosomal subunit protein uS2 (201 aa).

It belongs to the universal ribosomal protein uS2 family. Part of the 50S ribosomal subunit.

The polypeptide is Small ribosomal subunit protein uS2 (Thermococcus kodakarensis (strain ATCC BAA-918 / JCM 12380 / KOD1) (Pyrococcus kodakaraensis (strain KOD1))).